The sequence spans 164 residues: Putative protein ZNF321 (164 aa).

This is Putative protein ZNF321 (ZNF321P) from Homo sapiens (Human).